The sequence spans 230 residues: AA9 family lytic polysaccharide monooxygenase H (230 aa).

An N-terminal signal peptide occupies residues 1–17 (MKTLSAGLLALASAASA). Cu(2+)-binding residues include His18 and His89. Cysteines 59 and 178 form a disulfide. His164 and Gln173 together coordinate O2. Residue Tyr175 coordinates Cu(2+).

Belongs to the polysaccharide monooxygenase AA9 family. It depends on Cu(2+) as a cofactor.

It localises to the secreted. The enzyme catalyses [(1-&gt;4)-beta-D-glucosyl]n+m + reduced acceptor + O2 = 4-dehydro-beta-D-glucosyl-[(1-&gt;4)-beta-D-glucosyl]n-1 + [(1-&gt;4)-beta-D-glucosyl]m + acceptor + H2O.. Lytic polysaccharide monooxygenase (LPMO) that depolymerizes crystalline and amorphous polysaccharides via the oxidation of scissile alpha- or beta-(1-4)-glycosidic bonds, yielding primarly C1 oxidation products. Catalysis by LPMOs requires the reduction of the active-site copper from Cu(II) to Cu(I) by a reducing agent and H(2)O(2) or O(2) as a cosubstrate. Active on hemicelluloses, including xylan, glucomannan, and xyloglucan. Preferentially cleaves residual xylan in phosphoric acid-swollen cellulose (PASC). Moreover, when exposed to cellulose-xylan blends, shows a preference for xylan and for releasing oxidized xylooligosaccharides. Has no activity on ivory nut mannan (INM), a linear beta-1,4-linked mannan without substitutions. This chain is AA9 family lytic polysaccharide monooxygenase H, found in Malbranchea cinnamomea (Thermophilic fungus).